The primary structure comprises 317 residues: Hairy/enhancer-of-split related with YRPW motif protein 1 (317 aa).

The segment at 1 to 59 is disordered; that stretch reads MKRNHDFSSSDSELDENIEVEKESADENAGANSPLGSMSPSTTSQVQARKRRRGIIEKR. Residues 30 to 47 show a composition bias toward polar residues; it reads GANSPLGSMSPSTTSQVQ. The 56-residue stretch at 48–103 folds into the bHLH domain; that stretch reads ARKRRRGIIEKRRRDRINNSLSELRRLVPSAFEKQGSAKLEKAEILQMTVDHLKML. The region spanning 121-157 is the Orange domain; sequence YRGLGFRECLAETARYLSIIEGLDNTDPLRIRLVSHL. 2 stretches are compositionally biased toward low complexity: residues 193–226 and 248–264; these read QQQQQQGAPLARSTSSPPSSNSSSPSSSSPSAPS and PPSTSLPPGLTPPTASK. Residues 193 to 264 form a disordered region; the sequence is QQQQQQGAPL…PGLTPPTASK (72 aa). The YRPW motif motif lies at 307-310; the sequence is YRPW.

Belongs to the HEY family.

The protein resides in the nucleus. Functionally, transcriptional repressor which functions as a downstream effector of Notch signaling. This chain is Hairy/enhancer-of-split related with YRPW motif protein 1 (hey1), found in Danio rerio (Zebrafish).